The primary structure comprises 60 residues: Large ribosomal subunit protein bL33 (60 aa).

It belongs to the bacterial ribosomal protein bL33 family.

This Chlorobium chlorochromatii (strain CaD3) protein is Large ribosomal subunit protein bL33.